Consider the following 364-residue polypeptide: Dual-specificity RNA methyltransferase RlmN (364 aa).

Glu-91 (proton acceptor) is an active-site residue. The Radical SAM core domain occupies 97–333 (ESDRGTLCIS…VTVRKTRGDD (237 aa)). Cys-104 and Cys-338 are joined by a disulfide. Residues Cys-111, Cys-115, and Cys-118 each contribute to the [4Fe-4S] cluster site. S-adenosyl-L-methionine-binding positions include 164-165 (GE), Ser-196, 218-220 (SLH), and Asn-295. The active-site S-methylcysteine intermediate is the Cys-338.

The protein belongs to the radical SAM superfamily. RlmN family. [4Fe-4S] cluster serves as cofactor.

The protein localises to the cytoplasm. The catalysed reaction is adenosine(2503) in 23S rRNA + 2 reduced [2Fe-2S]-[ferredoxin] + 2 S-adenosyl-L-methionine = 2-methyladenosine(2503) in 23S rRNA + 5'-deoxyadenosine + L-methionine + 2 oxidized [2Fe-2S]-[ferredoxin] + S-adenosyl-L-homocysteine. It carries out the reaction adenosine(37) in tRNA + 2 reduced [2Fe-2S]-[ferredoxin] + 2 S-adenosyl-L-methionine = 2-methyladenosine(37) in tRNA + 5'-deoxyadenosine + L-methionine + 2 oxidized [2Fe-2S]-[ferredoxin] + S-adenosyl-L-homocysteine. In terms of biological role, specifically methylates position 2 of adenine 2503 in 23S rRNA and position 2 of adenine 37 in tRNAs. m2A2503 modification seems to play a crucial role in the proofreading step occurring at the peptidyl transferase center and thus would serve to optimize ribosomal fidelity. The protein is Dual-specificity RNA methyltransferase RlmN of Neisseria meningitidis serogroup A / serotype 4A (strain DSM 15465 / Z2491).